A 715-amino-acid polypeptide reads, in one-letter code: Coiled-coil domain-containing protein 170 (715 aa).

Coiled-coil stretches lie at residues 30–286 (VTRE…AGQQ), 360–418 (ESRD…LVSG), and 478–656 (ENKT…FREV). The interval 355 to 591 (MDSREESRDR…DLNKSRDQLE (237 aa)) is required for binding to microtubules and Golgi apparatus location.

Binds Golgi-associated microtubules.

The protein resides in the golgi apparatus. Plays a role in Golgi-associated microtubules organization and stabilization. This Homo sapiens (Human) protein is Coiled-coil domain-containing protein 170.